The following is a 401-amino-acid chain: LysM domain-containing GPI-anchored protein LYP4 (401 aa).

The first 23 residues, 1 to 23 (MPPPLLLLLLLAAAAAAVAPARS), serve as a signal peptide directing secretion. Intrachain disulfides connect Cys-30/Cys-96, Cys-36/Cys-162, Cys-94/Cys-160, and Cys-96/Cys-162. LysM domains lie at 106–156 (VRYV…TLFV) and 175–218 (LTYV…IIVV). 2 disulfides stabilise this stretch: Cys-223–Cys-255 and Cys-250–Cys-279. N-linked (GlcNAc...) asparagine glycosylation occurs at Asn-240. N-linked (GlcNAc...) asparagine glycosylation is found at Asn-281, Asn-288, and Asn-310. Ser-373 is lipidated: GPI-anchor amidated serine. Residues 374 to 401 (SGPPPAGRHVVGDVLGAFALCLVGNLLW) constitute a propeptide, removed in mature form.

As to quaternary structure, interacts with LYP6. Interacts with CEBIP. Interacts with CERK1. As to expression, expressed in roots and leaves.

Its subcellular location is the cell membrane. In terms of biological role, functions in innate immunity. Functions as a pattern recognition receptor (PRR), sensing bacterial peptidoglycan (PGN) and fungal chitin at the cell surface. Involved in resistance against the bacterial pathogen Xanthomonas oryzae pv. oryzae (Xoo) and the fungal pathogen Magnaporthe oryzae. Binds PGN and fungal chitin in vitro. Involved in microbe-associated molecular patterns (MAMPs) perception and participates in the activation of defense genes against the bacterial pathogen Xanthomonas oryzae pv. oryzicola (Xoc) or the fungal pathogen Magnaporthe oryzae. This Oryza sativa subsp. japonica (Rice) protein is LysM domain-containing GPI-anchored protein LYP4.